The following is a 282-amino-acid chain: Bis(5'-nucleosyl)-tetraphosphatase, symmetrical (282 aa).

Belongs to the Ap4A hydrolase family.

The enzyme catalyses P(1),P(4)-bis(5'-adenosyl) tetraphosphate + H2O = 2 ADP + 2 H(+). Hydrolyzes diadenosine 5',5'''-P1,P4-tetraphosphate to yield ADP. The sequence is that of Bis(5'-nucleosyl)-tetraphosphatase, symmetrical from Burkholderia mallei (strain NCTC 10247).